A 477-amino-acid polypeptide reads, in one-letter code: Argininosuccinate lyase (477 aa).

The protein belongs to the lyase 1 family. Argininosuccinate lyase subfamily.

Its subcellular location is the cytoplasm. The enzyme catalyses 2-(N(omega)-L-arginino)succinate = fumarate + L-arginine. It participates in amino-acid biosynthesis; L-arginine biosynthesis; L-arginine from L-ornithine and carbamoyl phosphate: step 3/3. This Corynebacterium glutamicum (strain R) protein is Argininosuccinate lyase.